We begin with the raw amino-acid sequence, 324 residues long: MEKKDLRIVYMGTPDFAVESLKRLVEGGYNVVGVITMPDKPMGRHGSVLQPSPVKEYAVSQGLRILQPEKLKDEAFIEELRSLQADLQIVVAFRMLPEIVWNMPRLGTFNLHASLLPQYRGAAPINWAVINGDTETGITTFFLKHEIDTGEIIQQVRVPIADTDNVEIVHDKLMYLGGDLVLETVDAILNGSVKPVPQESLIRQETELRPAPKIFKETCRIDWNKGVKQIYDFIRGLSPYPAAWTELCVADGTRQVLKIYETEKVFASHEMNIGDIRTDMKTYFQVAVKDGFINVLTLQLAGKKRMNVADFLRGYRTSDNNKVE.

Position 114–117 (114–117 (SLLP)) interacts with (6S)-5,6,7,8-tetrahydrofolate.

The protein belongs to the Fmt family.

It catalyses the reaction L-methionyl-tRNA(fMet) + (6R)-10-formyltetrahydrofolate = N-formyl-L-methionyl-tRNA(fMet) + (6S)-5,6,7,8-tetrahydrofolate + H(+). Attaches a formyl group to the free amino group of methionyl-tRNA(fMet). The formyl group appears to play a dual role in the initiator identity of N-formylmethionyl-tRNA by promoting its recognition by IF2 and preventing the misappropriation of this tRNA by the elongation apparatus. The polypeptide is Methionyl-tRNA formyltransferase (Phocaeicola vulgatus (strain ATCC 8482 / DSM 1447 / JCM 5826 / CCUG 4940 / NBRC 14291 / NCTC 11154) (Bacteroides vulgatus)).